We begin with the raw amino-acid sequence, 188 residues long: Elongation factor P (188 aa).

K34 carries the post-translational modification N6-(3,6-diaminohexanoyl)-5-hydroxylysine.

It belongs to the elongation factor P family. Post-translationally, may be beta-lysylated on the epsilon-amino group of Lys-34 by the combined action of EpmA and EpmB, and then hydroxylated on the C5 position of the same residue by EpmC (if this protein is present). Lysylation is critical for the stimulatory effect of EF-P on peptide-bond formation. The lysylation moiety may extend toward the peptidyltransferase center and stabilize the terminal 3-CCA end of the tRNA. Hydroxylation of the C5 position on Lys-34 may allow additional potential stabilizing hydrogen-bond interactions with the P-tRNA.

The protein localises to the cytoplasm. Its pathway is protein biosynthesis; polypeptide chain elongation. In terms of biological role, involved in peptide bond synthesis. Alleviates ribosome stalling that occurs when 3 or more consecutive Pro residues or the sequence PPG is present in a protein, possibly by augmenting the peptidyl transferase activity of the ribosome. Modification of Lys-34 is required for alleviation. The protein is Elongation factor P of Haemophilus influenzae (strain PittGG).